A 427-amino-acid chain; its full sequence is Serine--tRNA ligase (427 aa).

T228–E230 serves as a coordination point for L-serine. An ATP-binding site is contributed by R259–E261. E282 contacts L-serine. E346–S349 serves as a coordination point for ATP. S384 contacts L-serine.

This sequence belongs to the class-II aminoacyl-tRNA synthetase family. Type-1 seryl-tRNA synthetase subfamily. In terms of assembly, homodimer. The tRNA molecule binds across the dimer.

It localises to the cytoplasm. The catalysed reaction is tRNA(Ser) + L-serine + ATP = L-seryl-tRNA(Ser) + AMP + diphosphate + H(+). It carries out the reaction tRNA(Sec) + L-serine + ATP = L-seryl-tRNA(Sec) + AMP + diphosphate + H(+). Its pathway is aminoacyl-tRNA biosynthesis; selenocysteinyl-tRNA(Sec) biosynthesis; L-seryl-tRNA(Sec) from L-serine and tRNA(Sec): step 1/1. Functionally, catalyzes the attachment of serine to tRNA(Ser). Is also able to aminoacylate tRNA(Sec) with serine, to form the misacylated tRNA L-seryl-tRNA(Sec), which will be further converted into selenocysteinyl-tRNA(Sec). This Ehrlichia ruminantium (strain Welgevonden) protein is Serine--tRNA ligase.